Consider the following 294-residue polypeptide: Mitochondrial glycine transporter (294 aa).

Solcar repeat units lie at residues 5–84 (RRAT…IRQA), 102–186 (LNMY…MKVL), and 208–292 (ASTL…IVKK). Transmembrane regions (helical) follow at residues 11-36 (LIGGFSGGLVSAIILQPFDLLKTRLQ), 59-85 (GALPSCIRTSVGSAMYLTMLNSIRQAI), 108-133 (MFSGAVTRALTGLITMPITVIKVRYE), 161-184 (GFGATALRDAPYAGLYMLFYDRMK), 212-238 (INGSSAFSAAVIATSITAPFDTVKTRM), and 267-285 (GISLRLTRKAFSAGIAWGI).

The protein belongs to the mitochondrial carrier (TC 2.A.29) family. SLC25A38 subfamily.

The protein localises to the mitochondrion inner membrane. It catalyses the reaction glycine(in) = glycine(out). Its function is as follows. Mitochondrial glycine transporter that imports glycine into the mitochondrial matrix. Plays an important role in providing glycine for the first enzymatic step in heme biosynthesis, the condensation of glycine with succinyl-CoA to produce 5-aminolevulinate (ALA) in the mitochondrial matrix. The sequence is that of Mitochondrial glycine transporter from Kluyveromyces lactis (strain ATCC 8585 / CBS 2359 / DSM 70799 / NBRC 1267 / NRRL Y-1140 / WM37) (Yeast).